Consider the following 268-residue polypeptide: Energy-coupling factor transporter transmembrane protein EcfT (268 aa).

Transmembrane regions (helical) follow at residues 26 to 46, 72 to 92, 106 to 126, 149 to 169, and 247 to 267; these read IVTF…TYAW, IFWL…GTPI, ILNA…STIL, IGVP…FVPL, and VAFA…TWLH.

The protein belongs to the energy-coupling factor EcfT family. Forms a stable energy-coupling factor (ECF) transporter complex composed of 2 membrane-embedded substrate-binding proteins (S component), 2 ATP-binding proteins (A component) and 2 transmembrane proteins (T component). May be able to interact with more than 1 S component at a time.

The protein localises to the cell membrane. Transmembrane (T) component of an energy-coupling factor (ECF) ABC-transporter complex. Unlike classic ABC transporters this ECF transporter provides the energy necessary to transport a number of different substrates. The sequence is that of Energy-coupling factor transporter transmembrane protein EcfT from Leuconostoc gelidum subsp. gasicomitatum (strain DSM 15947 / CCUG 46042 / CECT 5767 / JCM 12535 / LMG 18811 / NBRC 113245 / TB1-10) (Leuconostoc gasicomitatum).